We begin with the raw amino-acid sequence, 327 residues long: Ferrochelatase 2 (327 aa).

Fe cation is bound by residues His-201 and Glu-282.

The protein belongs to the ferrochelatase family.

The protein resides in the cytoplasm. It carries out the reaction heme b + 2 H(+) = protoporphyrin IX + Fe(2+). It participates in porphyrin-containing compound metabolism; protoheme biosynthesis; protoheme from protoporphyrin-IX: step 1/1. In terms of biological role, catalyzes the ferrous insertion into protoporphyrin IX. The polypeptide is Ferrochelatase 2 (Shewanella oneidensis (strain ATCC 700550 / JCM 31522 / CIP 106686 / LMG 19005 / NCIMB 14063 / MR-1)).